Here is a 585-residue protein sequence, read N- to C-terminus: MRRFSETYGQKKQITFFCSNLSITAVVIEGLLKHKEEYGALERGMDILAEAVSVTLGPKGRNVVLESGKYGPPQIVNDGVTIAKEIELEDHIENTGVALIRQAASKTNDVAGDGTTTATVLAHAMVKQGMKNVRCRSKSIAIKRGIEKATQFVISQIAEYSRPVEDTKSITQVAAISAGNDMEVGQMIADAIEKVGREGVISLEEGKSTVTELELTEGNGWFLKKGFISPYFVTDTDRMETTQENPYILLTDKKISLVQELVPIHLELISKTSRPLLIIAEDVEKEALATLVVNKLRGIVNVVAVRAPGFGDRRKTMLEDIAILTGGQVISEDAGFSLETVQLDMLGQARRITVVKEGTTIIAEGHEREVKARCEQIRRQIEASESSYEREKLQERLAKLAGGVAVIKVGAATETEKDKKLRLEDAINATKAAVEEGIVPGGATLIHFIEDLNDWAEDNLLDDELIGALIVEKALSAPMKRIIENTGISSSIIIEKIKDKDFSIGYNAAQGEIEDMYEIGVIDPAKVTRSAMQNAASIASMILTTECIVVDKKKTCSLETSIYWLVLTNKYFCLDLLRLYFFLKD.

ATP contacts are provided by residues 55–58 (TLGP), 113–117 (DGTTT), glycine 442, 507–509 (NAA), and aspartate 523.

It belongs to the chaperonin (HSP60) family. In terms of assembly, forms a cylinder of 14 subunits composed of two heptameric rings stacked back-to-back. Interacts with the co-chaperonin GroES.

It localises to the plastid. The protein resides in the chloroplast. The catalysed reaction is ATP + H2O + a folded polypeptide = ADP + phosphate + an unfolded polypeptide.. Its function is as follows. Together with its co-chaperonin GroES, plays an essential role in assisting protein folding. The GroEL-GroES system forms a nano-cage that allows encapsulation of the non-native substrate proteins and provides a physical environment optimized to promote and accelerate protein folding. The polypeptide is Chaperonin GroEL, chloroplastic (Pyrenomonas salina).